The sequence spans 201 residues: Interferon-induced transmembrane protein 10 (201 aa).

2 disordered regions span residues 1-23 and 60-88; these read MAQG…DGTQ and AAPA…KTDS. Residues 1-127 lie on the Extracellular side of the membrane; sequence MAQGPSQCPA…PDTTEVNDYY (127 aa). Positions 63–73 are enriched in pro residues; sequence APEPSASPPMA. The chain crosses the membrane as a helical span at residues 128–148; the sequence is LWSIFNFVYLNFCCLGFIALA. 2 S-palmitoyl cysteine lipidation sites follow: C140 and C141. At 149 to 173 the chain is on the cytoplasmic side; sequence YSLKVRDKKLLNDLNGAVEDAKTAR. A helical transmembrane segment spans residues 174 to 194; sequence LFNITSSALAASCIILIFIFL. Topologically, residues 195-201 are extracellular; it reads RYPLTDY.

It belongs to the CD225/Dispanin family.

It localises to the cell membrane. The protein is Interferon-induced transmembrane protein 10 (Ifitm10) of Mus musculus (Mouse).